A 392-amino-acid polypeptide reads, in one-letter code: THO complex subunit MFT1 (392 aa).

Composition is skewed to acidic residues over residues 258-271 (DNIDEDYESDEDEE) and 290-330 (NVDE…EVDG). The disordered stretch occupies residues 258–392 (DNIDEDYESD…SASSSVEEVK (135 aa)). Position 266 is a phosphoserine (Ser266). Over residues 331 to 344 (ESSQQEDNSRQGNN) the composition is skewed to polar residues. Residues 345–367 (EETDKETGVIEEPDAVNDAEEAD) are compositionally biased toward acidic residues. The span at 377–392 (GTTSDFSASSSVEEVK) shows a compositional bias: polar residues.

In terms of assembly, component of the THO complex, which is composed of HPR1, MFT1, THO2 and THP2. Together with SUB2, TEX1 and YRA1, THO forms the transcription/export (TREX) complex. THO associates with DNA and RNA in vitro.

Its subcellular location is the nucleus. In terms of biological role, component the THO subcomplex of the TREX complex, which operates in coupling transcription elongation to mRNA export. The THO complex is recruited to transcribed genes and moves along the gene with the elongating polymerase during transcription. THO is important for stabilizing nascent RNA in the RNA polymerase II elongation complex by preventing formation of DNA:RNA hybrids behind the elongating polymerase. It functions in cotranscriptional formation of an export-competent messenger ribonucleoprotein particle (mRNP) by facilitating the loading of ATP-dependent RNA helicase SUB2 and the mRNA export factor YRA1 along the nascent mRNA. In Saccharomyces cerevisiae (strain ATCC 204508 / S288c) (Baker's yeast), this protein is THO complex subunit MFT1 (MFT1).